Here is a 540-residue protein sequence, read N- to C-terminus: uncharacterized protein (540 aa).

The N-terminal 58 residues, 1–58 (MAVSAFRGTRLPLFHHSQFPVARTVSGTSKKMIGARNFKGFVLTAQYSQTQDLFTSRL), are a transit peptide targeting the chloroplast. The region spanning 195-533 (YVDPTPIASA…ISIASNKRTN (339 aa)) is the Protein kinase domain. Residues 201–209 (IASASIAQV) and Lys224 each bind ATP. Asp362 serves as the catalytic Proton acceptor.

The protein belongs to the protein kinase superfamily. ADCK protein kinase family.

The protein localises to the plastid. It localises to the chloroplast. Its subcellular location is the plastoglobule. This is an uncharacterized protein from Arabidopsis thaliana (Mouse-ear cress).